The primary structure comprises 155 residues: 17.6 kDa class II heat shock protein (155 aa).

The 118-residue stretch at 38-155 (DAKAMAATPA…KPKTIQVQVA (118 aa)) folds into the sHSP domain.

The protein belongs to the small heat shock protein (HSP20) family. May form oligomeric structures.

Its subcellular location is the cytoplasm. In Arabidopsis thaliana (Mouse-ear cress), this protein is 17.6 kDa class II heat shock protein (HSP17.6).